Consider the following 95-residue polypeptide: Histone-like DNA-binding protein (95 aa).

Belongs to the bacterial histone-like protein family.

In Rickettsia montanensis, this protein is Histone-like DNA-binding protein.